Consider the following 510-residue polypeptide: ATP synthase subunit alpha (510 aa).

169 to 176 (GDRQTGKT) serves as a coordination point for ATP.

This sequence belongs to the ATPase alpha/beta chains family. F-type ATPases have 2 components, CF(1) - the catalytic core - and CF(0) - the membrane proton channel. CF(1) has five subunits: alpha(3), beta(3), gamma(1), delta(1), epsilon(1). CF(0) has four main subunits: a(1), b(1), b'(1) and c(9-12).

The protein resides in the cell inner membrane. It catalyses the reaction ATP + H2O + 4 H(+)(in) = ADP + phosphate + 5 H(+)(out). Its function is as follows. Produces ATP from ADP in the presence of a proton gradient across the membrane. The alpha chain is a regulatory subunit. This chain is ATP synthase subunit alpha, found in Rhodopseudomonas palustris (strain BisA53).